Consider the following 237-residue polypeptide: Ribosomal RNA small subunit methyltransferase G (237 aa).

Residues G78, F83, 129 to 130 (AE), and R148 each bind S-adenosyl-L-methionine. The interval 218–237 (KKETPNKYPRKAGMPNKRPL) is disordered.

This sequence belongs to the methyltransferase superfamily. RNA methyltransferase RsmG family.

It localises to the cytoplasm. Its function is as follows. Specifically methylates the N7 position of a guanine in 16S rRNA. The sequence is that of Ribosomal RNA small subunit methyltransferase G from Streptococcus gordonii (strain Challis / ATCC 35105 / BCRC 15272 / CH1 / DL1 / V288).